Here is a 186-residue protein sequence, read N- to C-terminus: GPI-anchored hemophore ARB_02741 (186 aa).

The N-terminal stretch at 1–18 (MKFSQAVIALAAATVVSA) is a signal peptide. The CFEM domain occupies 19–108 (QLPDVPQCSL…SSKPSEPSTS (90 aa)). Disulfide bonds link C26-C67, C30-C62, C40-C48, and C50-C83. D45 is a heme binding site. The interval 89–159 (PVSIPPVEES…NTGVPTQSTP (71 aa)) is disordered. Residues 96 to 131 (EESSSKPSEPSTSEAPTASPTESTPAPTTPAPTGTG) are compositionally biased toward low complexity. Over residues 132 to 144 (SPSGTGAPGGPSG) the composition is skewed to gly residues. The segment covering 148–159 (FTNTGVPTQSTP) has biased composition (polar residues). A lipid anchor (GPI-anchor amidated glycine) is attached at G163. Residues 164–186 (AASGLSANIGGMGAAILAIAAYL) constitute a propeptide, removed in mature form.

This sequence belongs to the RBT5 family. The GPI-anchor is attached to the protein in the endoplasmic reticulum and serves to target the protein to the cell surface. There, the glucosamine-inositol phospholipid moiety is cleaved off and the GPI-modified mannoprotein is covalently attached via its lipidless GPI glycan remnant to the 1,6-beta-glucan of the outer cell wall layer.

The protein localises to the secreted. It is found in the cell wall. The protein resides in the cell membrane. In terms of biological role, GPI-anchored cell wall protein involved in stabilizing the cell wall. This chain is GPI-anchored hemophore ARB_02741, found in Arthroderma benhamiae (strain ATCC MYA-4681 / CBS 112371) (Trichophyton mentagrophytes).